The sequence spans 192 residues: MKLLEERIRKDGEVLDGNVLKINSFLNHQVDPQLMMEVGKEFKRLFENEKITKVLTCEASGIAPGIMAAYQLGVPMVFARKKKPSTLNDAVYWADVFSYTKKVNNKICVEKKFLSSDDHLLIIDDFLAHGEAVKGMLNIADQANATVAGVGVVVAKEFQGGSEWVKDHGYSLEALARISDFENNQVHFVGEE.

Xanthine-binding residues include L20 and N27. A128 to A132 contacts 5-phospho-alpha-D-ribose 1-diphosphate. K156 contributes to the xanthine binding site.

The protein belongs to the purine/pyrimidine phosphoribosyltransferase family. Xpt subfamily. As to quaternary structure, homodimer.

The protein resides in the cytoplasm. It catalyses the reaction XMP + diphosphate = xanthine + 5-phospho-alpha-D-ribose 1-diphosphate. Its pathway is purine metabolism; XMP biosynthesis via salvage pathway; XMP from xanthine: step 1/1. Its function is as follows. Converts the preformed base xanthine, a product of nucleic acid breakdown, to xanthosine 5'-monophosphate (XMP), so it can be reused for RNA or DNA synthesis. In Lactobacillus johnsonii (strain CNCM I-12250 / La1 / NCC 533), this protein is Xanthine phosphoribosyltransferase.